We begin with the raw amino-acid sequence, 491 residues long: Katanin p60 ATPase-containing subunit A1 (491 aa).

The interaction with KATNB1 stretch occupies residues 1–29 (MSLLMITENVKLAREYALLGNYDSAMVYY). The segment at 1–75 (MSLLMITENV…VKEIMKTLES (75 aa)) is interaction with dynein and NDEL1. An interaction with microtubules region spans residues 1–185 (MSLLMITENV…EPEANKFDST (185 aa)). Position 42 is a phosphoserine; by DYRK2 (S42). A disordered region spans residues 87 to 183 (QHELPSSEGE…VTEPEANKFD (97 aa)). A compositionally biased stretch (basic and acidic residues) spans 145–169 (HSDRGKAVRSREKKEQSKGREEKNK). 249-256 (GPPGTGKT) is a binding site for ATP.

This sequence belongs to the AAA ATPase family. Katanin p60 subunit A1 subfamily. Can homooligomerize into hexameric rings, which may be promoted by interaction with microtubules. Interacts with KATNB1, which may serve as a targeting subunit. Interacts with ASPM; the katanin complex formation KATNA1:KATNB1 is required for the association of ASPM. Interacts with dynein and NDEL1. Associates with the E3 ligase complex containing DYRK2, EDD/UBR5, DDB1 and DCAF1 proteins (EDVP complex). Interacts with KLHL42 (via the kelch domains). Interacts with CUL3; the interaction is enhanced by KLHL42. Interacts with KATNB1 and KATNBL1. Post-translationally, phosphorylation by DYRK2 triggers ubiquitination and subsequent degradation. In terms of processing, ubiquitinated by the BCR(KLHL42) E3 ubiquitin ligase complex, leading to its proteasomal degradation. Ubiquitinated by the EDVP E3 ligase complex and subsequently targeted for proteasomal degradation.

The protein resides in the cytoplasm. Its subcellular location is the midbody. The protein localises to the cytoskeleton. It is found in the microtubule organizing center. It localises to the centrosome. The protein resides in the spindle pole. Its subcellular location is the spindle. It carries out the reaction n ATP + n H2O + a microtubule = n ADP + n phosphate + (n+1) alpha/beta tubulin heterodimers.. With respect to regulation, ATPase activity is stimulated by microtubules, which promote homooligomerization. ATP-dependent microtubule severing is stimulated by interaction with KATNB1. Functionally, catalytic subunit of a complex which severs microtubules in an ATP-dependent manner. Microtubule severing may promote rapid reorganization of cellular microtubule arrays and the release of microtubules from the centrosome following nucleation. Microtubule release from the mitotic spindle poles may allow depolymerization of the microtubule end proximal to the spindle pole, leading to poleward microtubule flux and poleward motion of chromosome. Microtubule release within the cell body of neurons may be required for their transport into neuronal processes by microtubule-dependent motor proteins. This transport is required for axonal growth. This chain is Katanin p60 ATPase-containing subunit A1 (Katna1), found in Rattus norvegicus (Rat).